A 78-amino-acid polypeptide reads, in one-letter code: Broad mercury transporter MerE (78 aa).

2 helical membrane passes run 19–39 and 47–67; these read LWGA…AAVL and FLGE…VLAV.

It is found in the cell inner membrane. In terms of biological role, broad mercury transporter that mediates the transport of both CH(3)Hg(I) and Hg(II) across the membrane. The protein is Broad mercury transporter MerE of Shigella flexneri.